The primary structure comprises 214 residues: Adenylate kinase (214 aa).

10–15 (GAGKGT) contributes to the ATP binding site. The segment at 30-59 (STGDMLRAAIKAGTELGLKAKAVMDAGQLV) is NMP. Residues T31, R36, 57–59 (QLV), 85–88 (GFPR), and Q92 each bind AMP. The LID stretch occupies residues 122 to 159 (GRRVHSGSGRTYHVVFNPPKVEGKDDVTGEDLVIRADD). Residues R123 and 132-133 (TY) contribute to the ATP site. R156 and R167 together coordinate AMP. ATP is bound at residue Q200.

Belongs to the adenylate kinase family. As to quaternary structure, monomer.

It localises to the cytoplasm. It carries out the reaction AMP + ATP = 2 ADP. Its pathway is purine metabolism; AMP biosynthesis via salvage pathway; AMP from ADP: step 1/1. In terms of biological role, catalyzes the reversible transfer of the terminal phosphate group between ATP and AMP. Plays an important role in cellular energy homeostasis and in adenine nucleotide metabolism. This chain is Adenylate kinase, found in Aeromonas hydrophila subsp. hydrophila (strain ATCC 7966 / DSM 30187 / BCRC 13018 / CCUG 14551 / JCM 1027 / KCTC 2358 / NCIMB 9240 / NCTC 8049).